A 348-amino-acid polypeptide reads, in one-letter code: 4-hydroxy-2-oxovalerate aldolase (348 aa).

The 253-residue stretch at 9–261 folds into the Pyruvate carboxyltransferase domain; the sequence is ITVHDMTLRD…RTGVDVWKIQ (253 aa). Residue 17 to 18 participates in substrate binding; it reads RD. D18 is a Mn(2+) binding site. The active-site Proton acceptor is H21. Substrate contacts are provided by S171 and H200. Mn(2+)-binding residues include H200 and H202. Y291 serves as a coordination point for substrate.

The protein belongs to the 4-hydroxy-2-oxovalerate aldolase family.

The enzyme catalyses (S)-4-hydroxy-2-oxopentanoate = acetaldehyde + pyruvate. The chain is 4-hydroxy-2-oxovalerate aldolase from Ralstonia pickettii (strain 12J).